A 572-amino-acid polypeptide reads, in one-letter code: Sulfite reductase [NADPH] hemoprotein beta-component (572 aa).

Residues Cys-437, Cys-443, Cys-482, and Cys-486 each coordinate [4Fe-4S] cluster. A siroheme-binding site is contributed by Cys-486.

This sequence belongs to the nitrite and sulfite reductase 4Fe-4S domain family. Alpha(8)-beta(8). The alpha component is a flavoprotein, the beta component is a hemoprotein. Siroheme is required as a cofactor. It depends on [4Fe-4S] cluster as a cofactor.

The enzyme catalyses hydrogen sulfide + 3 NADP(+) + 3 H2O = sulfite + 3 NADPH + 4 H(+). It participates in sulfur metabolism; hydrogen sulfide biosynthesis; hydrogen sulfide from sulfite (NADPH route): step 1/1. Functionally, component of the sulfite reductase complex that catalyzes the 6-electron reduction of sulfite to sulfide. This is one of several activities required for the biosynthesis of L-cysteine from sulfate. The polypeptide is Sulfite reductase [NADPH] hemoprotein beta-component (Lysinibacillus sphaericus (strain C3-41)).